A 288-amino-acid polypeptide reads, in one-letter code: Ribosomal RNA small subunit methyltransferase A (288 aa).

Positions 28, 30, 55, 76, 101, and 130 each coordinate S-adenosyl-L-methionine.

It belongs to the class I-like SAM-binding methyltransferase superfamily. rRNA adenine N(6)-methyltransferase family. RsmA subfamily.

It is found in the cytoplasm. The enzyme catalyses adenosine(1518)/adenosine(1519) in 16S rRNA + 4 S-adenosyl-L-methionine = N(6)-dimethyladenosine(1518)/N(6)-dimethyladenosine(1519) in 16S rRNA + 4 S-adenosyl-L-homocysteine + 4 H(+). Functionally, specifically dimethylates two adjacent adenosines (A1518 and A1519) in the loop of a conserved hairpin near the 3'-end of 16S rRNA in the 30S particle. May play a critical role in biogenesis of 30S subunits. The protein is Ribosomal RNA small subunit methyltransferase A of Moorella thermoacetica (strain ATCC 39073 / JCM 9320).